The chain runs to 428 residues: Dihydroorotase (428 aa).

The Zn(2+) site is built by His59 and His61. Substrate-binding positions include 61 to 63 and Asn93; that span reads HLR. Residues Asp151, His178, and His231 each coordinate Zn(2+). Asn277 serves as a coordination point for substrate. Asp304 contributes to the Zn(2+) binding site. Asp304 is a catalytic residue. Substrate is bound by residues His308 and 322 to 323; that span reads FG.

The protein belongs to the metallo-dependent hydrolases superfamily. DHOase family. Class I DHOase subfamily. Zn(2+) serves as cofactor.

The catalysed reaction is (S)-dihydroorotate + H2O = N-carbamoyl-L-aspartate + H(+). It functions in the pathway pyrimidine metabolism; UMP biosynthesis via de novo pathway; (S)-dihydroorotate from bicarbonate: step 3/3. Functionally, catalyzes the reversible cyclization of carbamoyl aspartate to dihydroorotate. The sequence is that of Dihydroorotase from Bacillus anthracis (strain A0248).